The chain runs to 370 residues: DNA polymerase IV (370 aa).

The UmuC domain maps to Ile14–Gly198. Mg(2+)-binding residues include Asp18 and Asp116. Residue Glu117 is part of the active site.

This sequence belongs to the DNA polymerase type-Y family. In terms of assembly, monomer. Mg(2+) serves as cofactor.

It localises to the cytoplasm. The catalysed reaction is DNA(n) + a 2'-deoxyribonucleoside 5'-triphosphate = DNA(n+1) + diphosphate. Its function is as follows. Poorly processive, error-prone DNA polymerase involved in untargeted mutagenesis. Copies undamaged DNA at stalled replication forks, which arise in vivo from mismatched or misaligned primer ends. These misaligned primers can be extended by PolIV. Exhibits no 3'-5' exonuclease (proofreading) activity. May be involved in translesional synthesis, in conjunction with the beta clamp from PolIII. The sequence is that of DNA polymerase IV from Streptococcus mutans serotype c (strain ATCC 700610 / UA159).